The sequence spans 352 residues: [LysW]-L-2-aminoadipate/[LysW]-L-glutamate phosphate reductase (352 aa).

13–16 (SGYT) lines the NADP(+) pocket. Cys-153 is an active-site residue. Asn-319 serves as a coordination point for NADP(+).

Belongs to the NAGSA dehydrogenase family. Type 1 subfamily. LysY sub-subfamily.

The protein resides in the cytoplasm. The catalysed reaction is [amino-group carrier protein]-C-terminal-N-(1-carboxy-5-oxopentan-1-yl)-L-glutamine + phosphate + NADP(+) = [amino-group carrier protein]-C-terminal-N-(1-carboxy-5-phosphooxy-5-oxopentan-1-yl)-L-glutamine + NADPH + H(+). It carries out the reaction [amino-group carrier protein]-C-terminal-gamma-(L-glutamyl-5-semialdehyde)-L-glutamate + phosphate + NADP(+) = [amino-group carrier protein]-C-terminal-gamma-(5-phospho-L-glutamyl)-L-glutamate + NADPH + H(+). It participates in amino-acid biosynthesis; L-lysine biosynthesis via AAA pathway; L-lysine from L-alpha-aminoadipate (Thermus route): step 3/5. It functions in the pathway amino-acid biosynthesis; L-arginine biosynthesis. Its function is as follows. Involved in both the arginine and lysine biosynthetic pathways. This chain is [LysW]-L-2-aminoadipate/[LysW]-L-glutamate phosphate reductase, found in Saccharolobus solfataricus (strain ATCC 35092 / DSM 1617 / JCM 11322 / P2) (Sulfolobus solfataricus).